A 514-amino-acid chain; its full sequence is Protein phosphatase 1H (514 aa).

Phosphoserine is present on Ser-7. Residues 77-507 (ATGYAEVINA…DDISVYVIPL (431 aa)) enclose the PPM-type phosphatase domain. Positions 109 to 135 (AVTSTPNRNSSKRRSSLPNGEGLQLKE) are disordered. Thr-113 bears the Phosphothreonine mark. Phosphoserine is present on residues Ser-124 and Ser-211. Arg-213 is subject to Omega-N-methylarginine. Phosphoserine is present on Ser-221. Residue Thr-224 is modified to Phosphothreonine. Phosphoserine is present on Ser-422.

It belongs to the PP2C family.

It is found in the nucleus. The protein resides in the cytoplasm. It carries out the reaction O-phospho-L-seryl-[protein] + H2O = L-seryl-[protein] + phosphate. The enzyme catalyses O-phospho-L-threonyl-[protein] + H2O = L-threonyl-[protein] + phosphate. In terms of biological role, dephosphorylates CDKN1B at 'Thr-187', thus removing a signal for proteasomal degradation. This is Protein phosphatase 1H (PPM1H) from Homo sapiens (Human).